A 318-amino-acid chain; its full sequence is Glutathione synthetase (318 aa).

In terms of domain architecture, ATP-grasp spans lysine 128 to alanine 313. Leucine 154–glycine 210 contributes to the ATP binding site. Glutamate 284 and asparagine 286 together coordinate Mg(2+).

It belongs to the prokaryotic GSH synthase family. Mg(2+) serves as cofactor. Requires Mn(2+) as cofactor.

It carries out the reaction gamma-L-glutamyl-L-cysteine + glycine + ATP = glutathione + ADP + phosphate + H(+). It participates in sulfur metabolism; glutathione biosynthesis; glutathione from L-cysteine and L-glutamate: step 2/2. This Neisseria meningitidis serogroup A / serotype 4A (strain DSM 15465 / Z2491) protein is Glutathione synthetase.